Consider the following 180-residue polypeptide: Small ribosomal subunit protein bS21c (180 aa).

Residues 1–79 (MASTSSLLNF…PSLAFSNTLY (79 aa)) constitute a chloroplast transit peptide. The segment covering 14–45 (LFPSNTSLPPSSNPKFPNPNSLSSQQNSISIS) has biased composition (low complexity). Disordered regions lie at residues 14–49 (LFPS…SKKH) and 124–180 (NKQE…GAPF). Positions 130–147 (KRKHREAAKRNSRRRRGP) are enriched in basic residues. Basic and acidic residues predominate over residues 154–166 (GKEEATKVDKKED).

As to quaternary structure, component of the chloroplast small ribosomal subunit (SSU). Mature 70S chloroplast ribosomes of higher plants consist of a small (30S) and a large (50S) subunit. The 30S small subunit contains 1 molecule of ribosomal RNA (16S rRNA) and 24 different proteins. The 50S large subunit contains 3 rRNA molecules (23S, 5S and 4.5S rRNA) and 33 different proteins. bS21c binds directly to 16S ribosomal RNA.

It localises to the plastid. Its subcellular location is the chloroplast. Functionally, component of the chloroplast ribosome (chloro-ribosome), a dedicated translation machinery responsible for the synthesis of chloroplast genome-encoded proteins, including proteins of the transcription and translation machinery and components of the photosynthetic apparatus. The polypeptide is Small ribosomal subunit protein bS21c (rps21) (Spinacia oleracea (Spinach)).